A 205-amino-acid polypeptide reads, in one-letter code: Recombination protein RecR (205 aa).

The C4-type zinc finger occupies 58–75 (CSLCQNVTDKEIDPCNIC). The region spanning 83 to 182 (RVVCVVEAPN…KVTRIARGIP (100 aa)) is the Toprim domain.

The protein belongs to the RecR family.

Functionally, may play a role in DNA repair. It seems to be involved in an RecBC-independent recombinational process of DNA repair. It may act with RecF and RecO. This Chloroherpeton thalassium (strain ATCC 35110 / GB-78) protein is Recombination protein RecR.